The chain runs to 152 residues: Superoxide dismutase [Cu-Zn] 1 (152 aa).

Cu cation contacts are provided by His-45, His-47, and His-62. Residues Cys-56 and Cys-145 are joined by a disulfide bond. Positions 62, 70, 79, and 82 each coordinate Zn(2+). Residue His-119 participates in Cu cation binding.

This sequence belongs to the Cu-Zn superoxide dismutase family. In terms of assembly, homodimer. Cu cation is required as a cofactor. It depends on Zn(2+) as a cofactor.

Its subcellular location is the cytoplasm. It catalyses the reaction 2 superoxide + 2 H(+) = H2O2 + O2. In terms of biological role, destroys radicals which are normally produced within the cells and which are toxic to biological systems. The chain is Superoxide dismutase [Cu-Zn] 1 (SODCC.1) from Mesembryanthemum crystallinum (Common ice plant).